A 126-amino-acid chain; its full sequence is 13 kDa ribonucleoprotein-associated protein (126 aa).

It belongs to the eukaryotic ribosomal protein eL8 family. As to quaternary structure, component of the U3 snoRNP particle. Binds to the C'/D and B/C motifs in U3 snoRNA. Component of the 25S U4/U6.U5 tri-snRNP particle, a subcomplex of the spliceosome. Binds to the 5' stem-loop of U4 snRNA.

The protein resides in the nucleus. Its subcellular location is the nucleolus. Common component of the spliceosome and rRNA processing machinery. In association with the spliceosomal U4/U6.U5 tri-snRNP particle, required for splicing of pre-mRNA. In association with box C/D snoRNPs, required for processing of pre-ribosomal RNA (rRNA) and site-specific 2'-O-methylation of substrate RNAs. Essential for the accumulation and stability of U4 snRNA, U6 snRNA, and box C/D snoRNAs. This chain is 13 kDa ribonucleoprotein-associated protein (SNU13), found in Yarrowia lipolytica (strain CLIB 122 / E 150) (Yeast).